Reading from the N-terminus, the 434-residue chain is Homogentisate 1,2-dioxygenase (434 aa).

Catalysis depends on H289, which acts as the Proton acceptor. 2 residues coordinate Fe cation: H332 and E338. Y347 and H368 together coordinate homogentisate. H368 is a Fe cation binding site.

Belongs to the homogentisate dioxygenase family. Hexamer; dimer of trimers. Fe cation serves as cofactor.

The catalysed reaction is homogentisate + O2 = 4-maleylacetoacetate + H(+). The protein operates within amino-acid degradation; L-phenylalanine degradation; acetoacetate and fumarate from L-phenylalanine: step 4/6. In terms of biological role, involved in the catabolism of homogentisate (2,5-dihydroxyphenylacetate or 2,5-OH-PhAc), a central intermediate in the degradation of phenylalanine and tyrosine. Catalyzes the oxidative ring cleavage of the aromatic ring of homogentisate to yield maleylacetoacetate. The polypeptide is Homogentisate 1,2-dioxygenase (Pseudomonas syringae pv. syringae (strain B728a)).